Reading from the N-terminus, the 220-residue chain is Probable cytidylate kinase (220 aa).

10 to 18 (GPAASGKSS) is a binding site for ATP.

The protein belongs to the cytidylate kinase family. Type 1 subfamily.

It carries out the reaction CMP + ATP = CDP + ADP. The catalysed reaction is dCMP + ATP = dCDP + ADP. The protein is Probable cytidylate kinase of Encephalitozoon cuniculi (strain GB-M1) (Microsporidian parasite).